We begin with the raw amino-acid sequence, 370 residues long: Probable trehalose-phosphate phosphatase 6 (370 aa).

It belongs to the trehalose phosphatase family. A divalent metal cation serves as cofactor.

The catalysed reaction is alpha,alpha-trehalose 6-phosphate + H2O = alpha,alpha-trehalose + phosphate. Its pathway is glycan biosynthesis; trehalose biosynthesis. Its function is as follows. Removes the phosphate from trehalose 6-phosphate to produce free trehalose. Trehalose accumulation in plant may improve abiotic stress tolerance. The protein is Probable trehalose-phosphate phosphatase 6 (TPP6) of Oryza sativa subsp. japonica (Rice).